Consider the following 442-residue polypeptide: 3-dehydroquinate synthase, chloroplastic (442 aa).

A chloroplast-targeting transit peptide spans 1–61 (MASSFCPKQA…TTRLKVLATS (61 aa)). NAD(+)-binding positions include N119, 150–152 (DGE), K155, 183–188 (GGVIGD), 208–209 (TT), K221, K230, and 248–251 (TLNT). E263 contributes to the a divalent metal cation binding site. K305 is an NAD(+) binding site. Positions 326 and 343 each coordinate a divalent metal cation.

This sequence belongs to the sugar phosphate cyclases superfamily. Dehydroquinate synthase family. As to quaternary structure, homodimer. It depends on a divalent metal cation as a cofactor. The cofactor is NAD(+). Highly expressed in roots. Lower expression in stems, flowers and cotyledons. Barely detected in leaves.

It is found in the plastid. The protein localises to the chloroplast. It carries out the reaction 7-phospho-2-dehydro-3-deoxy-D-arabino-heptonate = 3-dehydroquinate + phosphate. The protein operates within metabolic intermediate biosynthesis; chorismate biosynthesis; chorismate from D-erythrose 4-phosphate and phosphoenolpyruvate: step 2/7. Catalyzes the second step in the shikimate pathway. This Solanum lycopersicum (Tomato) protein is 3-dehydroquinate synthase, chloroplastic (DHQS).